The sequence spans 492 residues: MGKNLTKRSEDYSKWYNELVVKADLAENSAVRGCMVIKPYGYAIWEKMQAELDRMFKETGHQNAYFPLFVPKHLFEAEEKNAEGFAKECAVVTHYRLKNDPDKPGKLMVDPDAKLEEELVVRPTSEAIIWNTYKNWIQSYRDLPIKVNQWANVVRWEMRTRLFLRTAEFLWQEGHTAHATKDEALEETELMNNIYAEFAENFMAMPVVKGSKTESERFAGALETYCIEALMQDGKALQAGTSHFLGQNFAEAFDVKFATKEGGLEHVWATSWGVSTRLMGALIMTHSDDNGLVLPPNLAPIQVVIVPIYRSEEQLDQISEVANELVKELRAVGVSVKFDNNDNQKPGWKFAQYELQGVPLRLAIGPKDLEKGTVELARRDTLTKEFVNRSEVVEKIKALMTEIQDSLFDKAKQYRNEHITEVDSFDDFKKVLKEKGGFISAHWDGTPETENKIKDLTKATIRCVPFDRKEGAGECVLTGNPSEGRVLFAKAY.

Belongs to the class-II aminoacyl-tRNA synthetase family. ProS type 3 subfamily. In terms of assembly, homodimer.

The protein localises to the cytoplasm. It carries out the reaction tRNA(Pro) + L-proline + ATP = L-prolyl-tRNA(Pro) + AMP + diphosphate. Functionally, catalyzes the attachment of proline to tRNA(Pro) in a two-step reaction: proline is first activated by ATP to form Pro-AMP and then transferred to the acceptor end of tRNA(Pro). The sequence is that of Proline--tRNA ligase from Christiangramia forsetii (strain DSM 17595 / CGMCC 1.15422 / KT0803) (Gramella forsetii).